The chain runs to 429 residues: Enolase (429 aa).

Gln162 lines the (2R)-2-phosphoglycerate pocket. Glu204 (proton donor) is an active-site residue. The Mg(2+) site is built by Asp241, Glu283, and Asp310. The (2R)-2-phosphoglycerate site is built by Lys335, Arg364, Ser365, and Lys386. Lys335 serves as the catalytic Proton acceptor.

The protein belongs to the enolase family. It depends on Mg(2+) as a cofactor.

The protein resides in the cytoplasm. It localises to the secreted. The protein localises to the cell surface. The catalysed reaction is (2R)-2-phosphoglycerate = phosphoenolpyruvate + H2O. It functions in the pathway carbohydrate degradation; glycolysis; pyruvate from D-glyceraldehyde 3-phosphate: step 4/5. In terms of biological role, catalyzes the reversible conversion of 2-phosphoglycerate (2-PG) into phosphoenolpyruvate (PEP). It is essential for the degradation of carbohydrates via glycolysis. The sequence is that of Enolase from Mycolicibacterium vanbaalenii (strain DSM 7251 / JCM 13017 / BCRC 16820 / KCTC 9966 / NRRL B-24157 / PYR-1) (Mycobacterium vanbaalenii).